Here is a 711-residue protein sequence, read N- to C-terminus: Putative membrane protein ActII-3 (711 aa).

The next 12 membrane-spanning stretches (helical) occupy residues 14-34, 175-195, 199-219, 235-255, 281-301, 313-333, 369-389, 516-536, 540-560, 573-593, 623-643, and 645-665; these read LKWLVLAAWIGLLIVLQPLAG, ADFKLTLVTLLIVVTILVVTY, LLWLLPMISAGMSLVISQAIV, AMILTVLVLGAATDYALLLVA, AIVASAATVAVSMLVLLLAAL, VGVLVGLLSMMTLLPALLVIF, AVWVTTSLLLGAVATLAVTLN, IIPVILAVVFCILALLLRALV, LLIASVVLSFFTALGLAALFF, FPLWVFVFLVALGVDYNIFLV, AGLVLAGTFAALATLPLVFIA, and LGFTVAVGVLLDTMIVRSVLV. The tract at residues 685–711 is disordered; sequence REDPSEDPAVSGMPDSIDSEASTTASR.

It belongs to the resistance-nodulation-cell division (RND) (TC 2.A.6) family. MmpL subfamily.

It is found in the cell membrane. This chain is Putative membrane protein ActII-3 (actII-3), found in Streptomyces coelicolor (strain ATCC BAA-471 / A3(2) / M145).